A 28-amino-acid chain; its full sequence is Conotoxin Cl1.2 (28 aa).

Post-translationally, contains 2 disulfide bonds. As to expression, expressed by the venom duct.

The protein localises to the secreted. The protein is Conotoxin Cl1.2 of Californiconus californicus (California cone).